Consider the following 597-residue polypeptide: Large ribosomal subunit assembly factor BipA (597 aa).

Residues 3 to 198 (LPIRNVAIIA…AILHHVPPPA (196 aa)) form the tr-type G domain. GTP-binding positions include 15–20 (DHGKTT) and 128–131 (NKID).

It belongs to the TRAFAC class translation factor GTPase superfamily. Classic translation factor GTPase family. BipA subfamily. As to quaternary structure, monomer.

Its subcellular location is the cytoplasm. The enzyme catalyses GTP + H2O = GDP + phosphate + H(+). Its function is as follows. A 50S ribosomal subunit assembly protein with GTPase activity, required for 50S subunit assembly at low temperatures, may also play a role in translation. Binds GTP and analogs. Binds the 70S ribosome between the 30S and 50S subunits, in a similar position as ribosome-bound EF-G; it contacts a number of ribosomal proteins, both rRNAs and the A-site tRNA. The polypeptide is Large ribosomal subunit assembly factor BipA (Synechocystis sp. (strain ATCC 27184 / PCC 6803 / Kazusa)).